A 445-amino-acid polypeptide reads, in one-letter code: tRNA modification GTPase MnmE (445 aa).

Positions 25, 83, and 121 each coordinate (6S)-5-formyl-5,6,7,8-tetrahydrofolate. The TrmE-type G domain maps to 217 to 371 (GVRVVILGPP…LLTLIQEKSR (155 aa)). GTP-binding positions include 227-232 (NAGKST), 246-252 (SEHPGTT), and 271-274 (DTAG). 2 residues coordinate Mg(2+): Ser-231 and Thr-252. A (6S)-5-formyl-5,6,7,8-tetrahydrofolate-binding site is contributed by Lys-445.

This sequence belongs to the TRAFAC class TrmE-Era-EngA-EngB-Septin-like GTPase superfamily. TrmE GTPase family. Homodimer. Heterotetramer of two MnmE and two MnmG subunits. It depends on K(+) as a cofactor.

It is found in the cytoplasm. Functionally, exhibits a very high intrinsic GTPase hydrolysis rate. Involved in the addition of a carboxymethylaminomethyl (cmnm) group at the wobble position (U34) of certain tRNAs, forming tRNA-cmnm(5)s(2)U34. This chain is tRNA modification GTPase MnmE, found in Anaplasma phagocytophilum (strain HZ).